Here is a 433-residue protein sequence, read N- to C-terminus: Serine--tRNA ligase (433 aa).

Residue 235–237 (TSE) participates in L-serine binding. 266–268 (RSE) is a binding site for ATP. Residue E289 participates in L-serine binding. ATP is bound at residue 353-356 (EISS). Residue S388 coordinates L-serine.

The protein belongs to the class-II aminoacyl-tRNA synthetase family. Type-1 seryl-tRNA synthetase subfamily. As to quaternary structure, homodimer. The tRNA molecule binds across the dimer.

The protein localises to the cytoplasm. The catalysed reaction is tRNA(Ser) + L-serine + ATP = L-seryl-tRNA(Ser) + AMP + diphosphate + H(+). It catalyses the reaction tRNA(Sec) + L-serine + ATP = L-seryl-tRNA(Sec) + AMP + diphosphate + H(+). It functions in the pathway aminoacyl-tRNA biosynthesis; selenocysteinyl-tRNA(Sec) biosynthesis; L-seryl-tRNA(Sec) from L-serine and tRNA(Sec): step 1/1. Its function is as follows. Catalyzes the attachment of serine to tRNA(Ser). Is also able to aminoacylate tRNA(Sec) with serine, to form the misacylated tRNA L-seryl-tRNA(Sec), which will be further converted into selenocysteinyl-tRNA(Sec). The polypeptide is Serine--tRNA ligase (Burkholderia cenocepacia (strain ATCC BAA-245 / DSM 16553 / LMG 16656 / NCTC 13227 / J2315 / CF5610) (Burkholderia cepacia (strain J2315))).